The primary structure comprises 174 residues: Period clock protein (174 aa).

A disordered region spans residues serine 46–threonine 134. 45 repeat units span residues glycine 49–threonine 50, glycine 51–alanine 52, glycine 53–threonine 54, glycine 55–threonine 56, glycine 57–threonine 58, glycine 59–threonine 60, glycine 61–threonine 62, glycine 63–threonine 64, glycine 65–threonine 66, glycine 67–threonine 68, glycine 69–threonine 70, glycine 71–threonine 72, glycine 73–threonine 74, glycine 75–threonine 76, glycine 77–threonine 78, glycine 79–threonine 80, glycine 81–threonine 82, glycine 83–threonine 84, glycine 85–threonine 86, glycine 87–threonine 88, glycine 89–threonine 90, glycine 91–threonine 92, glycine 93–threonine 94, glycine 95–threonine 96, glycine 97–threonine 98, glycine 99–threonine 100, glycine 101–threonine 102, glycine 103–threonine 104, glycine 105–threonine 106, glycine 107–threonine 108, glycine 109–threonine 110, glycine 111–threonine 112, glycine 113–threonine 114, glycine 115–threonine 116, glycine 117–threonine 118, glycine 119–threonine 120, glycine 121–threonine 122, glycine 123–threonine 124, glycine 125–threonine 126, glycine 127–threonine 128, glycine 129–threonine 130, glycine 131–threonine 132, glycine 133–threonine 134, glycine 135–threonine 136, and glycine 137–threonine 138. Residues glycine 49–threonine 138 form a 45 X 2 AA tandem repeats of G-[TA] region. The segment covering threonine 50–threonine 134 has biased composition (gly residues).

Its subcellular location is the plastid. It is found in the chloroplast. This Acetabularia acetabulum (Mermaid's wine glass) protein is Period clock protein.